The chain runs to 60 residues: Large ribosomal subunit protein bL32c (60 aa).

This sequence belongs to the bacterial ribosomal protein bL32 family.

Its subcellular location is the plastid. The protein resides in the chloroplast. The polypeptide is Large ribosomal subunit protein bL32c (Psilotum nudum (Whisk fern)).